Here is an 829-residue protein sequence, read N- to C-terminus: Probable methyltransferase PMT26 (829 aa).

At 1–17 the chain is on the cytoplasmic side; it reads MAQPRYTRIDNRRPSSN. A helical; Signal-anchor for type II membrane protein transmembrane segment spans residues 18–38; it reads YCSTVTVVVFVALCLVGIWMM. Residues 39–829 lie on the Lumenal side of the membrane; that stretch reads TSSSVGPAQN…EVETLTYAIG (791 aa). The disordered stretch occupies residues 55 to 258; the sequence is DNKDGIKKQM…TSGDLSPPGA (204 aa). Basic and acidic residues-rich tracts occupy residues 85-143, 151-160, 168-177, and 187-231; these read NEDK…DSKS, LDEKKDLKDN, TNEKQTKPET, and ENQK…KENT. 4 N-linked (GlcNAc...) asparagine glycosylation sites follow: Asn-215, Asn-247, Asn-264, and Asn-270. The segment covering 241-252 has biased composition (polar residues); it reads QEGQSKNETSGD. Residues 271-291 are disordered; it reads GSFSTQATESKNEKEAQKGSG. The span at 280–291 shows a compositional bias: basic and acidic residues; that stretch reads SKNEKEAQKGSG. N-linked (GlcNAc...) asparagine glycosylation is found at Asn-302, Asn-579, Asn-595, and Asn-756.

This sequence belongs to the methyltransferase superfamily.

The protein localises to the golgi apparatus membrane. In Arabidopsis thaliana (Mouse-ear cress), this protein is Probable methyltransferase PMT26.